The primary structure comprises 199 residues: Probable GTP-binding protein EngB (199 aa).

The 172-residue stretch at 28 to 199 (DIPEIALAGR…QAWDAILEQI (172 aa)) folds into the EngB-type G domain. GTP-binding positions include 36 to 43 (GRSNVGKS), 63 to 67 (GKTQL), 81 to 84 (DVPG), 148 to 151 (TKAD), and 180 to 182 (FSS). 2 residues coordinate Mg(2+): S43 and T65.

The protein belongs to the TRAFAC class TrmE-Era-EngA-EngB-Septin-like GTPase superfamily. EngB GTPase family. The cofactor is Mg(2+).

Functionally, necessary for normal cell division and for the maintenance of normal septation. The chain is Probable GTP-binding protein EngB from Streptococcus uberis (strain ATCC BAA-854 / 0140J).